The sequence spans 118 residues: Large ribosomal subunit protein bL20 (118 aa).

It belongs to the bacterial ribosomal protein bL20 family.

Its function is as follows. Binds directly to 23S ribosomal RNA and is necessary for the in vitro assembly process of the 50S ribosomal subunit. It is not involved in the protein synthesizing functions of that subunit. This is Large ribosomal subunit protein bL20 from Psychromonas ingrahamii (strain DSM 17664 / CCUG 51855 / 37).